A 92-amino-acid polypeptide reads, in one-letter code: Acylphosphatase (92 aa).

Residues 5 to 92 form the Acylphosphatase-like domain; it reads GVTIYVYGRV…EDIADFIVRH (88 aa). Residues Arg-20 and Asn-38 contribute to the active site.

Belongs to the acylphosphatase family.

The catalysed reaction is an acyl phosphate + H2O = a carboxylate + phosphate + H(+). The polypeptide is Acylphosphatase (acyP) (Photorhabdus laumondii subsp. laumondii (strain DSM 15139 / CIP 105565 / TT01) (Photorhabdus luminescens subsp. laumondii)).